A 270-amino-acid polypeptide reads, in one-letter code: Protein ABHD14A (270 aa).

The chain crosses the membrane as a helical; Signal-anchor for type II membrane protein span at residues 9–29 (LVVLGLVLLATVLLYLLLPSM). Asn-61 carries an N-linked (GlcNAc...) asparagine glycan. Active-site charge relay system residues include Ser-170 and Asp-221. Asn-237 is a glycosylation site (N-linked (GlcNAc...) asparagine). The active-site Charge relay system is the His-248.

Belongs to the AB hydrolase superfamily. ABHD14 family.

It is found in the cytoplasm. It localises to the membrane. Functionally, possible role in granule neuron development. The chain is Protein ABHD14A from Danio rerio (Zebrafish).